Reading from the N-terminus, the 177-residue chain is ATP synthase subunit delta (177 aa).

Belongs to the ATPase delta chain family. In terms of assembly, F-type ATPases have 2 components, F(1) - the catalytic core - and F(0) - the membrane proton channel. F(1) has five subunits: alpha(3), beta(3), gamma(1), delta(1), epsilon(1). F(0) has three main subunits: a(1), b(2) and c(10-14). The alpha and beta chains form an alternating ring which encloses part of the gamma chain. F(1) is attached to F(0) by a central stalk formed by the gamma and epsilon chains, while a peripheral stalk is formed by the delta and b chains.

Its subcellular location is the cell inner membrane. Functionally, f(1)F(0) ATP synthase produces ATP from ADP in the presence of a proton or sodium gradient. F-type ATPases consist of two structural domains, F(1) containing the extramembraneous catalytic core and F(0) containing the membrane proton channel, linked together by a central stalk and a peripheral stalk. During catalysis, ATP synthesis in the catalytic domain of F(1) is coupled via a rotary mechanism of the central stalk subunits to proton translocation. Its function is as follows. This protein is part of the stalk that links CF(0) to CF(1). It either transmits conformational changes from CF(0) to CF(1) or is implicated in proton conduction. In Klebsiella pneumoniae (strain 342), this protein is ATP synthase subunit delta.